The sequence spans 284 residues: Phosphonates import ATP-binding protein PhnC 2 (284 aa).

The region spanning 5-253 (IEVRGLSKSF…MLRDLYGTEA (249 aa)) is the ABC transporter domain. 38–45 (GASGSGKS) is an ATP binding site.

Belongs to the ABC transporter superfamily. Phosphonates importer (TC 3.A.1.9.1) family. In terms of assembly, the complex is composed of two ATP-binding proteins (PhnC), two transmembrane proteins (PhnE) and a solute-binding protein (PhnD).

The protein localises to the cell inner membrane. It catalyses the reaction phosphonate(out) + ATP + H2O = phosphonate(in) + ADP + phosphate + H(+). Part of the ABC transporter complex PhnCDE involved in phosphonates import. Responsible for energy coupling to the transport system. The polypeptide is Phosphonates import ATP-binding protein PhnC 2 (Cupriavidus necator (strain ATCC 17699 / DSM 428 / KCTC 22496 / NCIMB 10442 / H16 / Stanier 337) (Ralstonia eutropha)).